Here is a 122-residue protein sequence, read N- to C-terminus: Ribosome-binding factor A (122 aa).

Residues 95 to 111 are compositionally biased toward basic and acidic residues; the sequence is PTVERVTRIQRTLREVS. Residues 95–122 are disordered; it reads PTVERVTRIQRTLREVSGEDGDGNGTQE.

It belongs to the RbfA family. In terms of assembly, monomer. Binds 30S ribosomal subunits, but not 50S ribosomal subunits or 70S ribosomes.

The protein localises to the cytoplasm. In terms of biological role, one of several proteins that assist in the late maturation steps of the functional core of the 30S ribosomal subunit. Associates with free 30S ribosomal subunits (but not with 30S subunits that are part of 70S ribosomes or polysomes). Required for efficient processing of 16S rRNA. May interact with the 5'-terminal helix region of 16S rRNA. The protein is Ribosome-binding factor A of Rubrobacter xylanophilus (strain DSM 9941 / JCM 11954 / NBRC 16129 / PRD-1).